The chain runs to 589 residues: Leucine-rich repeat and immunoglobulin-like domain-containing nogo receptor-interacting protein 3 (589 aa).

A signal peptide spans 1–23 (MTCWLHMLGLHLLLLPTAPLAAG). One can recognise an LRRNT domain in the interval 24-53 (CPARCECSASTRTVACGRRRLTAIPEGIPA). The Extracellular segment spans residues 24-528 (CPARCECSAS…LDLTTILVST (505 aa)). LRR repeat units follow at residues 54–75 (ETRM…DLAS), 78–99 (TLEE…AFAN), 102–123 (RLRV…VFTH), 126–147 (SLTL…SFQD), 150–171 (SLQR…AFAG), 174–195 (GLAE…SLGH), 206–227 (HLAI…SHLE), 246–267 (NLTS…ALRQ), 270–291 (HLTC…SFRD), 294–315 (RLRE…AFVG), and 318–339 (QIRL…TFHS). An N-linked (GlcNAc...) asparagine glycan is attached at Asn-184. N-linked (GlcNAc...) asparagine glycans are attached at residues Asn-246, Asn-256, and Asn-275. The N-linked (GlcNAc...) asparagine glycan is linked to Asn-323. The LRRCT domain maps to 351-405 (NPLACDCRLLWIVQRRKTLNFDGRLPACATPAEVRGDALHNLPDSVLFEYFVCRK). Residues 406–495 (PKIRERRLQH…GNDTYFATLT (90 aa)) enclose the Ig-like C2-type domain. Cys-428 and Cys-479 are disulfide-bonded. N-linked (GlcNAc...) asparagine glycans are attached at residues Asn-487, Asn-501, and Asn-509. Residues 529–549 (AMGCITFLGVVLFCFLLLFVW) traverse the membrane as a helical segment. Over 550–589 (SRGRGQHKNNFSVEYSFRKVDGPAAAAGQGGARKFNMKMI) the chain is Cytoplasmic.

The protein resides in the membrane. This chain is Leucine-rich repeat and immunoglobulin-like domain-containing nogo receptor-interacting protein 3 (Lingo3), found in Mus musculus (Mouse).